A 1170-amino-acid chain; its full sequence is DNA excision repair protein ERCC-5 (1170 aa).

The tract at residues 1-78 is N-domain; the sequence is MGVQGLWKLL…RIRPIFVFDG (78 aa). At Lys8 the chain carries N6-acetyllysine. Mg(2+) is bound at residue Asp30. Residues 31 to 67 are DNA-binding; may bind to the undamaged single-strand DNA of the DNA repair bubble; it reads ISIWLNQALKGVRDSHGNVIENAHLLTLFHRLCKLLF. Mg(2+) is bound at residue Asp77. Positions 79–784 are spacer region; it reads DAPLLKKQTL…LRLFGVPYIQ (706 aa). Disordered regions lie at residues 304-479, 520-587, and 600-701; these read DSES…RCDT, HVSG…PKAC, and LENA…ECLL. Over residues 306–323 the composition is skewed to low complexity; that stretch reads ESLPSSSNVHSVSSNLKS. Basic and acidic residues-rich tracts occupy residues 324–336 and 363–373; these read SPHEKVKPEREPE and SREGRQSKERN. Ser384 is modified (phosphoserine). Over residues 455 to 474 the composition is skewed to polar residues; that stretch reads TSGSSANGQTDSAHSFTTAS. The span at 539–551 shows a compositional bias: basic and acidic residues; that stretch reads THSDQGIDIHPED. The segment covering 659-676 has biased composition (polar residues); it reads SVVSNSELQTESSEASTH. Positions 677–698 are enriched in basic and acidic residues; it reads LSEKDAEEPRETLEEGTSRDTE. Phosphoserine occurs at positions 704 and 705. Residues 785–880 are I-domain; that stretch reads APMEAEAQCA…VTAMEILNEF (96 aa). 4 residues coordinate Mg(2+): Glu788, Glu790, Asp809, and Asp811. A DNA-binding; may bind to the undamaged single-strand DNA of the DNA repair bubble region spans residues 819–835; it reads HVYKNFFNKNKFVEYYQ. Residues 847–879 form a DNA-binding; H2TH (helix-2turn-helix) motif which binds double-stranded DNA region; it reads RNKLINLAYLLGSDYTEGIPTVGCVTAMEILNE. Asp860 serves as a coordination point for Mg(2+). Residues 911 to 917 form a DNA-binding; may bind double-stranded DNA region; it reads TKVKKKL. An interaction with PCNA region spans residues 980 to 1008; sequence LKHLNAHQTQLRIDSFFRLAQQEKQDAKL. An interaction with ERCC6/CSB region spans residues 1010 to 1170; sequence KSHRLNRAVT…KSMKRRKKKT (161 aa). Residues 1033–1146 form a disordered region; it reads LTKVTEALDD…DDEDKAKTVL (114 aa). Basic and acidic residues predominate over residues 1041 to 1060; the sequence is DDAKGKTQKRELPYKKETSV. The Nuclear localization signal 1 motif lies at 1049–1065; that stretch reads KRELPYKKETSVPKRRR. Over residues 1094 to 1110 the composition is skewed to polar residues; it reads SVMSARQRSAAESSKIS. The Nuclear localization signal 2 motif lies at 1153–1170; sequence FGKKKLKLKSMKRRKKKT.

Belongs to the XPG/RAD2 endonuclease family. XPG subfamily. Monomer. Homodimer. Component of the homologous recombination repair (HR) complex composed of ERCC5/XPG, BRCA2, PALB2, DSS1 and RAD51. Within the complex, interacts with BRCA2 and PALB2. Interacts with RNA polymerase II. Interacts (via C-terminus) with ERCC6/CSB; the interaction stimulates ERCC6/CSB binding to the DNA repair bubble and ERCC6/CSB ATPase activity. May form a complex composed of RNA polymerase II, ERCC6/CSB and ERCC5/XPG which associates with the DNA repair bubble during transcription-coupled nucleotide excision repair. Interacts with BRCA1; the interaction promotes the release of BRCA1 from DNA. Interacts with PCNA. Interacts with NTHL1; the interaction stimulates NTHL1 activity and NTHL1 binding to its DNA substrate. The cofactor is Mg(2+).

The protein resides in the nucleus. It localises to the chromosome. Its function is as follows. Single-stranded structure-specific DNA endonuclease involved in DNA excision repair. Makes the 3'incision in DNA nucleotide excision repair (NER). Binds and bends DNA repair bubble substrate and breaks base stacking at the single-strand/double-strand DNA junction of the DNA bubble. Plays a role in base excision repair (BER) by promoting the binding of DNA glycosylase NTHL1 to its substrate and increasing NTHL1 catalytic activity that removes oxidized pyrimidines from DNA. Involved in transcription-coupled nucleotide excision repair (TCR) which allows RNA polymerase II-blocking lesions to be rapidly removed from the transcribed strand of active genes. Functions during the initial step of TCR in cooperation with ERCC6/CSB to recognized stalled RNA polymerase II. Also, stimulates ERCC6/CSB binding to the DNA repair bubble and ERCC6/CSB ATPase activity. Required for DNA replication fork maintenance and preservation of genomic stability. Involved in homologous recombination repair (HRR) induced by DNA replication stress by recruiting RAD51, BRCA2, and PALB2 to the damaged DNA site. During HRR, binds to the replication fork with high specificity and stabilizes it. Also, acts upstream of HRR, to promote the release of BRCA1 from DNA. This is DNA excision repair protein ERCC-5 (Ercc5) from Mus musculus (Mouse).